The sequence spans 365 residues: MDFLKVSDKTTIPYRSDSLFSLNQQQYKESSFGFRDMEIHPHPTPYAGNGLLGCYYYYPFTNAQLKELERQAMIYKYMIASIPVPFDLLVSSPSSASPCNNKNIAGDLEPGRCRRTDGKKWRCAKEVVSNHKYCEKHLHRGRPRSRKHVEPPYSRPNNNGGSVKNRDLKKLPQKLSSSSIKDKTLEPMEVSSSISNYRDSRGSEKFTVLATTEQENKYLNFIDVWSDGVRSSEKQSTTSTPVSSSNGNLSLYSLDLSMGGNNLMGQDEMGLIQMGLGVIGSGSEDHHGYGPYGVTSSLEEMSSWLAPMSTTPGGPLAEILRPSTNLAISGDIESYSLMETPTPSSSPSRVMKKMTSSVSDESSQV.

Positions 59–94 constitute a QLQ domain; sequence PFTNAQLKELERQAMIYKYMIASIPVPFDLLVSSPS. Positions 107-151 constitute a WRC domain; the sequence is DLEPGRCRRTDGKKWRCAKEVVSNHKYCEKHLHRGRPRSRKHVEP. 2 consecutive short sequence motifs (bipartite nuclear localization signal) follow at residues 112–122 and 140–147; these read RCRRTDGKKWR and RGRPRSRK. Residues 137 to 147 show a composition bias toward basic residues; the sequence is HLHRGRPRSRK. Disordered stretches follow at residues 137–187 and 332–365; these read HLHR…TLEP and IESY…SSQV. Residues 337 to 365 are compositionally biased toward polar residues; it reads LMETPTPSSSPSRVMKKMTSSVSDESSQV.

It belongs to the GRF family.

The protein resides in the nucleus. Transcription activator that plays a role in the regulation of cell expansion in leaf and cotyledons tissues. Component of a network formed by miR396, the GRFs and their interacting factors (GIFs) acting in the regulation of meristem function, at least partially through the control of cell proliferation. In Arabidopsis thaliana (Mouse-ear cress), this protein is Growth-regulating factor 7 (GRF7).